The sequence spans 305 residues: Homoserine kinase (305 aa).

Position 93-103 (93-103 (PLSRGLGSSAT)) interacts with ATP.

Belongs to the GHMP kinase family. Homoserine kinase subfamily.

The protein resides in the cytoplasm. The catalysed reaction is L-homoserine + ATP = O-phospho-L-homoserine + ADP + H(+). The protein operates within amino-acid biosynthesis; L-threonine biosynthesis; L-threonine from L-aspartate: step 4/5. Catalyzes the ATP-dependent phosphorylation of L-homoserine to L-homoserine phosphate. The chain is Homoserine kinase from Picosynechococcus sp. (strain ATCC 27264 / PCC 7002 / PR-6) (Agmenellum quadruplicatum).